We begin with the raw amino-acid sequence, 663 residues long: UvrABC system protein B (663 aa).

The region spanning 31–271 (DNIEGGEKAQ…EASIAKIQAE (241 aa)) is the Helicase ATP-binding domain. 44 to 51 (GATGTGKT) serves as a coordination point for ATP. The short motif at 97–120 (YYDYYQPEAYVPSSDTYIEKDSSV) is the Beta-hairpin element. The Helicase C-terminal domain maps to 435–601 (QMDDLLGEIN…TIKKEIRDLI (167 aa)). The UVR domain maps to 627-662 (QEAIKKLQKQMHEAAELLDFELAAQIRDMVLELKSM).

This sequence belongs to the UvrB family. In terms of assembly, forms a heterotetramer with UvrA during the search for lesions. Interacts with UvrC in an incision complex.

The protein resides in the cytoplasm. In terms of biological role, the UvrABC repair system catalyzes the recognition and processing of DNA lesions. A damage recognition complex composed of 2 UvrA and 2 UvrB subunits scans DNA for abnormalities. Upon binding of the UvrA(2)B(2) complex to a putative damaged site, the DNA wraps around one UvrB monomer. DNA wrap is dependent on ATP binding by UvrB and probably causes local melting of the DNA helix, facilitating insertion of UvrB beta-hairpin between the DNA strands. Then UvrB probes one DNA strand for the presence of a lesion. If a lesion is found the UvrA subunits dissociate and the UvrB-DNA preincision complex is formed. This complex is subsequently bound by UvrC and the second UvrB is released. If no lesion is found, the DNA wraps around the other UvrB subunit that will check the other stand for damage. The polypeptide is UvrABC system protein B (Streptococcus uberis (strain ATCC BAA-854 / 0140J)).